Consider the following 313-residue polypeptide: Ribosomal RNA small subunit methyltransferase H (313 aa).

S-adenosyl-L-methionine-binding positions include 35–37 (GGH), aspartate 55, phenylalanine 79, aspartate 101, and glutamine 108.

The protein belongs to the methyltransferase superfamily. RsmH family.

It localises to the cytoplasm. It carries out the reaction cytidine(1402) in 16S rRNA + S-adenosyl-L-methionine = N(4)-methylcytidine(1402) in 16S rRNA + S-adenosyl-L-homocysteine + H(+). Functionally, specifically methylates the N4 position of cytidine in position 1402 (C1402) of 16S rRNA. This chain is Ribosomal RNA small subunit methyltransferase H, found in Salmonella paratyphi A (strain ATCC 9150 / SARB42).